The primary structure comprises 545 residues: Glucose-6-phosphate isomerase (545 aa).

The active-site Proton donor is Glu-351. Catalysis depends on residues His-382 and Lys-510.

The protein belongs to the GPI family.

It is found in the cytoplasm. The catalysed reaction is alpha-D-glucose 6-phosphate = beta-D-fructose 6-phosphate. It functions in the pathway carbohydrate biosynthesis; gluconeogenesis. The protein operates within carbohydrate degradation; glycolysis; D-glyceraldehyde 3-phosphate and glycerone phosphate from D-glucose: step 2/4. In terms of biological role, catalyzes the reversible isomerization of glucose-6-phosphate to fructose-6-phosphate. The polypeptide is Glucose-6-phosphate isomerase (Shewanella sp. (strain ANA-3)).